Consider the following 126-residue polypeptide: MIRTMLQGKLHRVKVTQADLHYEGSCAIDQDFLEAAGILEYEAIDIYNVDNGQRFSTYAIAAERGSRIISVNGAAARCACVGDKLIICSYVQMSDADARQHRPKVGYFEGDNHLQRKAKAVPVQVA.

The Schiff-base intermediate with substrate; via pyruvic acid role is filled by S25. At S25 the chain carries Pyruvic acid (Ser). Residue T57 participates in substrate binding. Y58 (proton donor) is an active-site residue. 73 to 75 (GAA) provides a ligand contact to substrate.

Belongs to the PanD family. Heterooctamer of four alpha and four beta subunits. It depends on pyruvate as a cofactor. Post-translationally, is synthesized initially as an inactive proenzyme, which is activated by self-cleavage at a specific serine bond to produce a beta-subunit with a hydroxyl group at its C-terminus and an alpha-subunit with a pyruvoyl group at its N-terminus.

It is found in the cytoplasm. It carries out the reaction L-aspartate + H(+) = beta-alanine + CO2. It functions in the pathway cofactor biosynthesis; (R)-pantothenate biosynthesis; beta-alanine from L-aspartate: step 1/1. Catalyzes the pyruvoyl-dependent decarboxylation of aspartate to produce beta-alanine. This chain is Aspartate 1-decarboxylase, found in Serratia proteamaculans (strain 568).